The primary structure comprises 259 residues: Potassium/proton antiporter CemA (259 aa).

The next 4 membrane-spanning stretches (helical) occupy residues 47 to 67 (CLLV…EPWV), 136 to 156 (IITH…YLVM), 184 to 204 (ILLA…ELLI), and 219 to 239 (IISS…KYWI).

This sequence belongs to the CemA family.

The protein resides in the plastid. The protein localises to the chloroplast inner membrane. It carries out the reaction K(+)(in) + H(+)(out) = K(+)(out) + H(+)(in). Contributes to K(+)/H(+) antiport activity by supporting proton efflux to control proton extrusion and homeostasis in chloroplasts in a light-dependent manner to modulate photosynthesis. Prevents excessive induction of non-photochemical quenching (NPQ) under continuous-light conditions. Indirectly promotes efficient inorganic carbon uptake into chloroplasts. The sequence is that of Potassium/proton antiporter CemA from Welwitschia mirabilis (Tree tumbo).